A 450-amino-acid chain; its full sequence is Glutamate--tRNA ligase 2 (450 aa).

A 'HIGH' region motif is present at residues 10–20; it reads PSPTGFLHIGG. A 'KMSKS' region motif is present at residues 232 to 236; it reads KLSKR. Lys235 is a binding site for ATP.

It belongs to the class-I aminoacyl-tRNA synthetase family. Glutamate--tRNA ligase type 1 subfamily. Monomer.

Its subcellular location is the cytoplasm. It carries out the reaction tRNA(Glu) + L-glutamate + ATP = L-glutamyl-tRNA(Glu) + AMP + diphosphate. Its function is as follows. Catalyzes the attachment of glutamate to tRNA(Glu) in a two-step reaction: glutamate is first activated by ATP to form Glu-AMP and then transferred to the acceptor end of tRNA(Glu). In Wolbachia pipientis subsp. Culex pipiens (strain wPip), this protein is Glutamate--tRNA ligase 2.